Reading from the N-terminus, the 98-residue chain is Small ribosomal subunit protein bS20 (98 aa).

Belongs to the bacterial ribosomal protein bS20 family.

Functionally, binds directly to 16S ribosomal RNA. The protein is Small ribosomal subunit protein bS20 of Parasynechococcus marenigrum (strain WH8102).